Consider the following 162-residue polypeptide: Phosphopantetheine adenylyltransferase (162 aa).

Residue T10 coordinates substrate. ATP contacts are provided by residues 10 to 11 and H18; that span reads TF. 3 residues coordinate substrate: K42, L74, and R88. Residues 89–91, E99, and 124–130 contribute to the ATP site; these read GLR and FSCISST.

This sequence belongs to the bacterial CoaD family. Homohexamer. Requires Mg(2+) as cofactor.

Its subcellular location is the cytoplasm. It catalyses the reaction (R)-4'-phosphopantetheine + ATP + H(+) = 3'-dephospho-CoA + diphosphate. Its pathway is cofactor biosynthesis; coenzyme A biosynthesis; CoA from (R)-pantothenate: step 4/5. Reversibly transfers an adenylyl group from ATP to 4'-phosphopantetheine, yielding dephospho-CoA (dPCoA) and pyrophosphate. The polypeptide is Phosphopantetheine adenylyltransferase (Francisella philomiragia subsp. philomiragia (strain ATCC 25017 / CCUG 19701 / FSC 153 / O#319-036)).